Reading from the N-terminus, the 934-residue chain is Pesticidal crystal protein Cry1Aa (934 aa).

Belongs to the delta endotoxin family.

Its function is as follows. Promotes colloidosmotic lysis by binding to the midgut epithelial cells of many lepidopteran larvae. This chain is Pesticidal crystal protein Cry1Aa (cry1Aa), found in Bacillus thuringiensis subsp. sotto.